Consider the following 580-residue polypeptide: E3 ubiquitin-protein ligase TRIM45 (580 aa).

An RING-type zinc finger spans residues 29 to 98; the sequence is CPLCLGLFKA…QIGILCPVCD (70 aa). 2 consecutive B box-type zinc fingers follow at residues 130-176 and 186-227; these read GQGL…MVDL and GKPI…CDFT. Positions 135, 138, 158, 162, 191, 194, 214, and 219 each coordinate Zn(2+). The stretch at 281–335 forms a coiled coil; that stretch reads SEGYIKAIEEHRDKLLKQLEDIRAQKENSLQLQKAQLEQLLADMRTGVEFTEHLL. A Filamin repeat occupies 394–497; that stretch reads TKEVDPAKCV…VQGSPFTVMV (104 aa).

This sequence belongs to the TRIM/RBCC family. Expressed in skeletal muscle, brain, heart and pancreas.

The protein resides in the cytoplasm. Its subcellular location is the nucleus. It catalyses the reaction S-ubiquitinyl-[E2 ubiquitin-conjugating enzyme]-L-cysteine + [acceptor protein]-L-lysine = [E2 ubiquitin-conjugating enzyme]-L-cysteine + N(6)-ubiquitinyl-[acceptor protein]-L-lysine.. Functionally, E3 ubiquitin-protein ligase that plays a role in the regulation of inflammatory response. Mechanistically, mediates the 'Lys-48'-linked polyubiquitination of TAB2, a regulatory protein of the kinase TAK1, leading to its degradation via the proteasomal pathway and inhibition of the TLR-mediated inflammatory immune response. May act as a transcriptional repressor in mitogen-activated protein kinase signaling pathway. The chain is E3 ubiquitin-protein ligase TRIM45 (TRIM45) from Homo sapiens (Human).